We begin with the raw amino-acid sequence, 232 residues long: Large ribosomal subunit protein uL1 (232 aa).

It belongs to the universal ribosomal protein uL1 family. In terms of assembly, part of the 50S ribosomal subunit.

In terms of biological role, binds directly to 23S rRNA. The L1 stalk is quite mobile in the ribosome, and is involved in E site tRNA release. Protein L1 is also a translational repressor protein, it controls the translation of the L11 operon by binding to its mRNA. The sequence is that of Large ribosomal subunit protein uL1 from Dichelobacter nodosus (strain VCS1703A).